The following is a 251-amino-acid chain: Octanoyltransferase (251 aa).

Positions 56–241 constitute a BPL/LPL catalytic domain; that stretch reads ADTGDEIWVV…NLDGASAAAD (186 aa). Residues 96–103, 168–170, and 181–183 contribute to the substrate site; these read RGGQITYH, ALG, and GLS. The active-site Acyl-thioester intermediate is the Cys-199.

Belongs to the LipB family.

It localises to the cytoplasm. The catalysed reaction is octanoyl-[ACP] + L-lysyl-[protein] = N(6)-octanoyl-L-lysyl-[protein] + holo-[ACP] + H(+). Its pathway is protein modification; protein lipoylation via endogenous pathway; protein N(6)-(lipoyl)lysine from octanoyl-[acyl-carrier-protein]: step 1/2. Its function is as follows. Catalyzes the transfer of endogenously produced octanoic acid from octanoyl-acyl-carrier-protein onto the lipoyl domains of lipoate-dependent enzymes. Lipoyl-ACP can also act as a substrate although octanoyl-ACP is likely to be the physiological substrate. The polypeptide is Octanoyltransferase (Burkholderia orbicola (strain AU 1054)).